The chain runs to 335 residues: Fimbrial adhesin PapGI (335 aa).

A signal peptide spans 1–21 (MKKWFPAFLFLSLSGGNDALA).

It belongs to the adhesin PapG family. Interacts with chaperone PapD. Assembly of the P pilus requires periplasmic chaperone PapD, in absence of the chaperone overexpression of this subunit is toxic, where the protein accumulates in the periplasm. PapD stimulates release of PapG from an inner membrane-associated form (where at least 1 disulfide bond can form) into the periplasm and also helps it achieve its correct digalactoside-binding conformation. In terms of processing, contains disulfide bonds.

It is found in the secreted. The protein localises to the fimbrium. Functionally, tip adhesin component of type P pili that binds preferentially to host cell glycosphingolipids such as globotriaosylceramide. This is Fimbrial adhesin PapGI from Escherichia coli.